The chain runs to 538 residues: Mitochondrial distribution and morphology protein 34 (538 aa).

Positions 1-224 (MSFRFDRSVF…LPTALFNMSQ (224 aa)) constitute an SMP-LTD domain. 2 disordered regions span residues 26–55 (ALNP…RKSG) and 231–251 (DGSR…NQPS).

It belongs to the MDM34 family. In terms of assembly, component of the ER-mitochondria encounter structure (ERMES) or MDM complex, composed of MMM1, MDM10, MDM12 and MDM34.

The protein localises to the mitochondrion outer membrane. In terms of biological role, component of the ERMES/MDM complex, which serves as a molecular tether to connect the endoplasmic reticulum (ER) and mitochondria. Components of this complex are involved in the control of mitochondrial shape and protein biogenesis, and function in nonvesicular lipid trafficking between the ER and mitochondria. MDM34 is required for the interaction of the ER-resident membrane protein MMM1 and the outer mitochondrial membrane-resident beta-barrel protein MDM10. This is Mitochondrial distribution and morphology protein 34 from Candida glabrata (strain ATCC 2001 / BCRC 20586 / JCM 3761 / NBRC 0622 / NRRL Y-65 / CBS 138) (Yeast).